A 339-amino-acid polypeptide reads, in one-letter code: D-erythrose-4-phosphate dehydrogenase (339 aa).

NAD(+) is bound at residue 12-13; it reads RI. Substrate is bound by residues 154-156, R200, 213-214, and R236; these read SCT and TK. C155 (nucleophile) is an active-site residue. Residue N318 participates in NAD(+) binding.

It belongs to the glyceraldehyde-3-phosphate dehydrogenase family. Epd subfamily. In terms of assembly, homotetramer.

It is found in the cytoplasm. It carries out the reaction D-erythrose 4-phosphate + NAD(+) + H2O = 4-phospho-D-erythronate + NADH + 2 H(+). Its pathway is cofactor biosynthesis; pyridoxine 5'-phosphate biosynthesis; pyridoxine 5'-phosphate from D-erythrose 4-phosphate: step 1/5. Catalyzes the NAD-dependent conversion of D-erythrose 4-phosphate to 4-phosphoerythronate. In Proteus mirabilis (strain HI4320), this protein is D-erythrose-4-phosphate dehydrogenase.